We begin with the raw amino-acid sequence, 275 residues long: Formamidopyrimidine-DNA glycosylase (275 aa).

The active-site Schiff-base intermediate with DNA is proline 2. Residue glutamate 3 is the Proton donor of the active site. Lysine 58 acts as the Proton donor; for beta-elimination activity in catalysis. Histidine 91, arginine 109, and arginine 154 together coordinate DNA. The FPG-type zinc finger occupies 240–274; sequence AVYERAGLPCRVCGTPIRRLVQGQRATYYCPSCQK. Arginine 264 serves as the catalytic Proton donor; for delta-elimination activity.

It belongs to the FPG family. Monomer. The cofactor is Zn(2+).

It carries out the reaction Hydrolysis of DNA containing ring-opened 7-methylguanine residues, releasing 2,6-diamino-4-hydroxy-5-(N-methyl)formamidopyrimidine.. The enzyme catalyses 2'-deoxyribonucleotide-(2'-deoxyribose 5'-phosphate)-2'-deoxyribonucleotide-DNA = a 3'-end 2'-deoxyribonucleotide-(2,3-dehydro-2,3-deoxyribose 5'-phosphate)-DNA + a 5'-end 5'-phospho-2'-deoxyribonucleoside-DNA + H(+). In terms of biological role, involved in base excision repair of DNA damaged by oxidation or by mutagenic agents. Acts as a DNA glycosylase that recognizes and removes damaged bases. Has a preference for oxidized purines, such as 7,8-dihydro-8-oxoguanine (8-oxoG). Has AP (apurinic/apyrimidinic) lyase activity and introduces nicks in the DNA strand. Cleaves the DNA backbone by beta-delta elimination to generate a single-strand break at the site of the removed base with both 3'- and 5'-phosphates. This is Formamidopyrimidine-DNA glycosylase from Bordetella petrii (strain ATCC BAA-461 / DSM 12804 / CCUG 43448).